The primary structure comprises 366 residues: Protein disulfide isomerase-like 2-1 (366 aa).

Positions 1–29 are cleaved as a signal peptide; the sequence is MATPQISRKALASLLLLVAAAAAVSTASA. 2 consecutive Thioredoxin domains span residues 30-138 and 139-257; these read DDVL…SEAA and TNVK…EKCG. Catalysis depends on nucleophile residues C59, C62, C178, and C181. 2 disulfides stabilise this stretch: C59–C62 and C178–C181.

Belongs to the protein disulfide isomerase family.

It localises to the secreted. It carries out the reaction Catalyzes the rearrangement of -S-S- bonds in proteins.. Its function is as follows. Acts as a protein-folding catalyst that interacts with nascent polypeptides to catalyze the formation, isomerization, and reduction or oxidation of disulfide bonds. May play a role in storage protein biogenesis. The polypeptide is Protein disulfide isomerase-like 2-1 (PDIL2-1) (Oryza sativa subsp. japonica (Rice)).